The chain runs to 253 residues: Testis-expressed protein 47 (253 aa).

Testis-specific.

This chain is Testis-expressed protein 47, found in Homo sapiens (Human).